The following is an 833-amino-acid chain: Translation initiation factor IF-2 (833 aa).

Residues 331–501 (TRAPVVTVMG…LLIAEMQDLK (171 aa)) enclose the tr-type G domain. The segment at 340-347 (GHVDHGKT) is G1. 340–347 (GHVDHGKT) provides a ligand contact to GTP. The interval 365 to 369 (GITQH) is G2. A G3 region spans residues 387–390 (DTPG). Residues 387 to 391 (DTPGH) and 441 to 444 (NKID) each bind GTP. The interval 441 to 444 (NKID) is G4. Residues 477 to 479 (SAL) are G5.

It belongs to the TRAFAC class translation factor GTPase superfamily. Classic translation factor GTPase family. IF-2 subfamily.

The protein resides in the cytoplasm. Its function is as follows. One of the essential components for the initiation of protein synthesis. Protects formylmethionyl-tRNA from spontaneous hydrolysis and promotes its binding to the 30S ribosomal subunits. Also involved in the hydrolysis of GTP during the formation of the 70S ribosomal complex. The protein is Translation initiation factor IF-2 of Rickettsia canadensis (strain McKiel).